We begin with the raw amino-acid sequence, 396 residues long: Phosphoglycerate kinase (396 aa).

Substrate-binding positions include Asp19 to Asn21, Arg34, His57 to Lys60, Arg116, and Arg153. Residues Lys204, Glu324, and Gly351–Thr354 contribute to the ATP site.

This sequence belongs to the phosphoglycerate kinase family. Monomer.

It localises to the cytoplasm. The catalysed reaction is (2R)-3-phosphoglycerate + ATP = (2R)-3-phospho-glyceroyl phosphate + ADP. The protein operates within carbohydrate degradation; glycolysis; pyruvate from D-glyceraldehyde 3-phosphate: step 2/5. The protein is Phosphoglycerate kinase of Maridesulfovibrio salexigens (strain ATCC 14822 / DSM 2638 / NCIMB 8403 / VKM B-1763) (Desulfovibrio salexigens).